We begin with the raw amino-acid sequence, 483 residues long: ATP synthase subunit beta (483 aa).

Position 167–174 (167–174 (GGAGVGKT)) interacts with ATP.

Belongs to the ATPase alpha/beta chains family. F-type ATPases have 2 components, CF(1) - the catalytic core - and CF(0) - the membrane proton channel. CF(1) has five subunits: alpha(3), beta(3), gamma(1), delta(1), epsilon(1). CF(0) has three main subunits: a(1), b(2) and c(9-12). The alpha and beta chains form an alternating ring which encloses part of the gamma chain. CF(1) is attached to CF(0) by a central stalk formed by the gamma and epsilon chains, while a peripheral stalk is formed by the delta and b chains.

It is found in the cell membrane. It catalyses the reaction ATP + H2O + 4 H(+)(in) = ADP + phosphate + 5 H(+)(out). Functionally, produces ATP from ADP in the presence of a proton gradient across the membrane. The catalytic sites are hosted primarily by the beta subunits. This Paenarthrobacter aurescens (strain TC1) protein is ATP synthase subunit beta.